We begin with the raw amino-acid sequence, 291 residues long: Probable xyloglucan endotransglucosylase/hydrolase protein 16 (291 aa).

Positions 1–24 (MGRILNRTVLMTLLVVTMAGTAFS) are cleaved as a signal peptide. One can recognise a GH16 domain in the interval 25–215 (GSFNEEFDLT…WSKAPFTAYY (191 aa)). The active-site Nucleophile is the Glu101. Glu105 acts as the Proton donor in catalysis. Xyloglucan is bound at residue Glu105. N-linked (GlcNAc...) asparagine glycosylation occurs at Asn109. Xyloglucan is bound by residues 118–120 (HTN), 128–130 (NRE), 194–195 (DW), and Gly199. Intrachain disulfides connect Cys223–Cys232 and Cys272–Cys286. Arg277 serves as a coordination point for xyloglucan.

It belongs to the glycosyl hydrolase 16 family. XTH group 2 subfamily. Contains at least one intrachain disulfide bond essential for its enzymatic activity.

It is found in the secreted. Its subcellular location is the cell wall. The protein localises to the extracellular space. The protein resides in the apoplast. It catalyses the reaction breaks a beta-(1-&gt;4) bond in the backbone of a xyloglucan and transfers the xyloglucanyl segment on to O-4 of the non-reducing terminal glucose residue of an acceptor, which can be a xyloglucan or an oligosaccharide of xyloglucan.. Its function is as follows. Catalyzes xyloglucan endohydrolysis (XEH) and/or endotransglycosylation (XET). Cleaves and religates xyloglucan polymers, an essential constituent of the primary cell wall, and thereby participates in cell wall construction of growing tissues. The polypeptide is Probable xyloglucan endotransglucosylase/hydrolase protein 16 (XTH16) (Arabidopsis thaliana (Mouse-ear cress)).